A 299-amino-acid chain; its full sequence is Diaminopimelate epimerase (299 aa).

3 residues coordinate substrate: Asn-13, Gln-46, and Asn-66. Cys-75 serves as the catalytic Proton donor. Substrate-binding positions include 76 to 77, Asn-166, Asn-199, and 217 to 218; these read GN and ER. The active-site Proton acceptor is Cys-226. 227-228 provides a ligand contact to substrate; it reads GT.

The protein belongs to the diaminopimelate epimerase family. As to quaternary structure, homodimer.

Its subcellular location is the cytoplasm. The catalysed reaction is (2S,6S)-2,6-diaminopimelate = meso-2,6-diaminopimelate. The protein operates within amino-acid biosynthesis; L-lysine biosynthesis via DAP pathway; DL-2,6-diaminopimelate from LL-2,6-diaminopimelate: step 1/1. Catalyzes the stereoinversion of LL-2,6-diaminopimelate (L,L-DAP) to meso-diaminopimelate (meso-DAP), a precursor of L-lysine and an essential component of the bacterial peptidoglycan. This Paraburkholderia phytofirmans (strain DSM 17436 / LMG 22146 / PsJN) (Burkholderia phytofirmans) protein is Diaminopimelate epimerase.